Here is a 423-residue protein sequence, read N- to C-terminus: F-box protein At1g52495 (423 aa).

The 47-residue stretch at 49–95 folds into the F-box domain; it reads KLKDVHLPLDLIVEILKKLPTKSLMRFRCVSKPWSFIISKRRDFVES.

This chain is F-box protein At1g52495, found in Arabidopsis thaliana (Mouse-ear cress).